The primary structure comprises 172 residues: 3-hydroxydecanoyl-[acyl-carrier-protein] dehydratase (172 aa).

Residue H71 is part of the active site.

It belongs to the thioester dehydratase family. FabA subfamily. As to quaternary structure, homodimer.

Its subcellular location is the cytoplasm. It catalyses the reaction a (3R)-hydroxyacyl-[ACP] = a (2E)-enoyl-[ACP] + H2O. The enzyme catalyses (3R)-hydroxydecanoyl-[ACP] = (2E)-decenoyl-[ACP] + H2O. The catalysed reaction is (2E)-decenoyl-[ACP] = (3Z)-decenoyl-[ACP]. It functions in the pathway lipid metabolism; fatty acid biosynthesis. Its function is as follows. Necessary for the introduction of cis unsaturation into fatty acids. Catalyzes the dehydration of (3R)-3-hydroxydecanoyl-ACP to E-(2)-decenoyl-ACP and then its isomerization to Z-(3)-decenoyl-ACP. Can catalyze the dehydratase reaction for beta-hydroxyacyl-ACPs with saturated chain lengths up to 16:0, being most active on intermediate chain length. The polypeptide is 3-hydroxydecanoyl-[acyl-carrier-protein] dehydratase (Escherichia coli (strain SE11)).